The sequence spans 295 residues: sn-glycerol-3-phosphate transport system permease protein UgpA (295 aa).

Over 1–11 (MSSSRPVFRSR) the chain is Cytoplasmic. The chain crosses the membrane as a helical span at residues 12–32 (WLPYLLVAPQLVITVIFFIWP). At 33–80 (AGEALWYSLQSVDPFGFSSQFVGLENFVALFHDSYYLDAFWTTIKFSA) the chain is on the periplasmic side. In terms of domain architecture, ABC transmembrane type-1 spans 76-284 (IKFSALVTFS…FLVIILTVVQ (209 aa)). The chain crosses the membrane as a helical span at residues 81-101 (LVTFSGLLVSLFFAALVDYVV). The Cytoplasmic portion of the chain corresponds to 102–109 (RGSRFYQT). The helical transmembrane segment at 110–130 (LMLLPYAVAPAVAAVLWIFLF) threads the bilayer. The Periplasmic portion of the chain corresponds to 131 to 157 (NPGRGLITHFLGEFGYDWNHAQNSGQA). The chain crosses the membrane as a helical span at residues 158–178 (MFLVVFASVWKQISYNFLFFF). The Cytoplasmic segment spans residues 179–207 (AALQSIPRSLVEAAAIDGAGPIRRFFRLS). The helical transmembrane segment at 208-228 (LPLIAPVSFFLLVVNLVYAFF) threads the bilayer. Topologically, residues 229-262 (DTFPVIDAATAGGPVQATTTLIYKIYREGFTGLD) are periplasmic. A helical transmembrane segment spans residues 263 to 283 (LSASAAQSVVLMFLVIILTVV). The Cytoplasmic segment spans residues 284–295 (QFRYVESKVRYQ).

This sequence belongs to the binding-protein-dependent transport system permease family. UgpAE subfamily. As to quaternary structure, the complex is composed of two ATP-binding proteins (UgpC), two transmembrane proteins (UgpA and UgpE) and a solute-binding protein (UgpB).

The protein localises to the cell inner membrane. Functionally, part of the ABC transporter complex UgpBAEC involved in sn-glycerol-3-phosphate (G3P) import. Probably responsible for the translocation of the substrate across the membrane. The chain is sn-glycerol-3-phosphate transport system permease protein UgpA (ugpA) from Salmonella typhimurium (strain LT2 / SGSC1412 / ATCC 700720).